The sequence spans 428 residues: UPF0597 protein PBPRB0240 (428 aa).

The protein belongs to the UPF0597 family.

The polypeptide is UPF0597 protein PBPRB0240 (Photobacterium profundum (strain SS9)).